A 215-amino-acid polypeptide reads, in one-letter code: MGKYCASLGVLKGPWDQVFAAFWQRYPNPYSKHVLTEDIVHREVTADHKLLSRRLLTKTNRMPRWAERFFPANVAHNVYIVEDSIVDPKNRTMTTFTWNINHARLMAVEERCVYRVNPENSSWTEVKREAWVSSSLFGVSRAVQEFGLARFKSNVTKSTKGFEYVLARMQGEAPSKTLVETAKEATEKAKETALAATEKAKDLASKAATKKKQFV.

The PRELI/MSF1 domain maps to 36 to 174 (TEDIVHREVT…VLARMQGEAP (139 aa)).

Forms a complex with TRIAP1 in the mitochondrion intermembrane space. Expressed within the blood islands and in the liver.

It is found in the mitochondrion. Its subcellular location is the mitochondrion intermembrane space. It carries out the reaction a 1,2-diacyl-sn-glycero-3-phosphate(in) = a 1,2-diacyl-sn-glycero-3-phosphate(out). Involved in the modulation of the mitochondrial apoptotic pathway by ensuring the accumulation of cardiolipin (CL) in mitochondrial membranes. The TRIAP1:PRELID1 complex probably functions as a PA transporter across the mitochondrion intermembrane space to provide PA for CL synthesis in the inner membrane. May be involved in hematopoiesis during avian development. The chain is PRELI domain-containing protein 1, mitochondrial (PRELID1) from Gallus gallus (Chicken).